A 326-amino-acid chain; its full sequence is Membrane-associated kinase regulator 5 (326 aa).

2 disordered regions span residues 188–239 and 267–326; these read TKKQ…GMSP and GSRE…KISD. 2 stretches are compositionally biased toward low complexity: residues 190–202 and 270–305; these read KQSSSTITSPTSS and ESSLLSRSTSESSSQEKLSTSSSEDSYLFSRISSDS.

Expressed in roots.

It localises to the cell membrane. Its subcellular location is the cytoplasm. The protein localises to the cytosol. Its function is as follows. Positive effector of CLE45 peptide signaling. Post-transcriptionally regulated amplifier of the CLE45 peptide signal that acts downstream of BAM3 in the regulation of the transition of root protophloem cells from proliferation to differentiation; thus preventing primary root elongation but stimulating lateral roots development. The sequence is that of Membrane-associated kinase regulator 5 from Arabidopsis thaliana (Mouse-ear cress).